The following is a 173-amino-acid chain: Gamma-crystallin S-1 (173 aa).

2 consecutive Beta/gamma crystallin 'Greek key' domains span residues 2–40 and 41–83; these read GKII…RVES and DWWV…RMLP. Residues 84-88 form a connecting peptide region; that stretch reads HTGRS. 2 consecutive Beta/gamma crystallin 'Greek key' domains span residues 89–129 and 130–172; these read YRMR…QVMD and GYWI…RRIM.

It belongs to the beta/gamma-crystallin family.

In terms of biological role, crystallins are the dominant structural components of the vertebrate eye lens. The protein is Gamma-crystallin S-1 (GS-1) of Chiloscyllium indicum (Slender bamboo shark).